Consider the following 378-residue polypeptide: Coiled-coil domain-containing protein 74A (378 aa).

3 disordered regions span residues 1–52, 128–211, and 301–328; these read MSGA…RNLD, GGPS…EEPL, and EGSQRPQAAPEEASFPRDQEATHFPKVS. A compositionally biased stretch (polar residues) spans 34 to 44; sequence LRPQSPQLRQS. The stretch at 47 to 90 forms a coiled coil; sequence QKRNLDLEKSLQFLQQQHSEMLAKLHEEIEHLKRENKDLHYKLI. A compositionally biased stretch (basic residues) spans 141–151; sequence RTHRPGGKRGR. The span at 165–182 shows a compositional bias: polar residues; sequence DSLSMSSFQSVKSISNSG. 2 stretches are compositionally biased toward basic and acidic residues: residues 194–205 and 314–323; these read QDSKADVSQKAD and SFPRDQEATH.

The chain is Coiled-coil domain-containing protein 74A (CCDC74A) from Homo sapiens (Human).